The following is a 593-amino-acid chain: Tectonic-1 (593 aa).

Positions 1 to 22 are cleaved as a signal peptide; sequence MGSRGLPPLLLVLLNCYTSSST. The disordered stretch occupies residues 37 to 72; that stretch reads KEDLNSTKATPTTLQPSLSPRTPGTPRAPERSGPRP. N41 carries N-linked (GlcNAc...) asparagine glycosylation. Residues 42-58 are compositionally biased toward polar residues; the sequence is STKATPTTLQPSLSPRT. Residue N303 is glycosylated (N-linked (GlcNAc...) asparagine). At R486 the chain carries Omega-N-methylarginine. A glycan (N-linked (GlcNAc...) asparagine) is linked at N536.

Belongs to the tectonic family. Part of the tectonic-like complex (also named B9 complex).

The protein localises to the cytoplasm. It is found in the cytoskeleton. It localises to the cilium basal body. The protein resides in the secreted. Functionally, component of the tectonic-like complex, a complex localized at the transition zone of primary cilia and acting as a barrier that prevents diffusion of transmembrane proteins between the cilia and plasma membranes. Regulator of Hedgehog (Hh), required for both activation and inhibition of the Hh pathway in the patterning of the neural tube. During neural tube development, it is required for formation of the most ventral cell types and for full Hh pathway activation. Functions in Hh signal transduction to fully activate the pathway in the presence of high Hh levels and to repress the pathway in the absence of Hh signals. Modulates Hh signal transduction downstream of SMO and RAB23. The protein is Tectonic-1 (Tctn1) of Mus musculus (Mouse).